Consider the following 738-residue polypeptide: MKVQRLFLVAIFCLSYMQLVKGQTLPRCPEKCGNVTLEYPFGFSPGCWRAEDPSFNLSCVNENLFYKGLEVVEISHSSQLRVLYPASYICYNSKGKFAKGTYYWSNLGNLTLSGNNTITALGCNSYAFVSSNGTRRNSVGCISACDALSHEANGECNGEGCCQNPVPAGNNWLIVRSYRFDNDTSVQPISEGQCIYAFLVENGKFKYNASDKYSYLQNRNVGFPVVLDWSIRGETCGQVGEKKCGVNGICSNSASGIGYTCKCKGGFQGNPYLQNGCQDINECTTANPIHKHNCSGDSTCENKLGHFRCNCRSRYELNTTTNTCKPKGNPEYVEWTTIVLGTTIGFLVILLAISCIEHKMKNTKDTELRQQFFEQNGGGMLMQRLSGAGPSNVDVKIFTEEGMKEATDGYDENRILGQGGQGTVYKGILPDNSIVAIKKARLGDNSQVEQFINEVLVLSQINHRNVVKLLGCCLETEVPLLVYEFISSGTLFDHLHGSMFDSSLTWEHRLRMAVEIAGTLAYLHSSASIPIIHRDIKTANILLDENLTAKVADFGASRLIPMDKEDLATMVQGTLGYLDPEYYNTGLLNEKSDVYSFGVVLMELLSGQKALCFERPQTSKHIVSYFASATKENRLHEIIDGQVMNENNQREIQKAARIAVECTRLTGEERPGMKEVAAELEALRVTKTKHKWSDEYPEQEDTEHLVGVQKLSAQGETSSSIGYDSIRNVAILDIEAGR.

The signal sequence occupies residues 1-22 (MKVQRLFLVAIFCLSYMQLVKG). The Extracellular segment spans residues 23-335 (QTLPRCPEKC…PKGNPEYVEW (313 aa)). Residues N34, N56, N109, N115, N132, N182, and N208 are each glycosylated (N-linked (GlcNAc...) asparagine). The EGF-like 1 domain maps to 232-278 (RGETCGQVGEKKCGVNGICSNSASGIGYTCKCKGGFQGNPYLQNGCQ). Intrachain disulfides connect C236–C250, C244–C261, C263–C277, C283–C300, C294–C309, and C311–C324. The 47-residue stretch at 279–325 (DINECTTANPIHKHNCSGDSTCENKLGHFRCNCRSRYELNTTTNTCK) folds into the EGF-like 2; calcium-binding domain. Residue N293 is glycosylated (N-linked (GlcNAc...) asparagine). N-linked (GlcNAc...) asparagine glycosylation occurs at N318. A helical membrane pass occupies residues 336-356 (TTIVLGTTIGFLVILLAISCI). Residues 357–738 (EHKMKNTKDT…VAILDIEAGR (382 aa)) are Cytoplasmic-facing. A Phosphothreonine modification is found at T399. The Protein kinase domain occupies 410 to 693 (YDENRILGQG…RVTKTKHKWS (284 aa)). ATP is bound by residues 416-424 (LGQGGQGTV) and K438. Y483 bears the Phosphotyrosine mark. D535 (proton acceptor) is an active-site residue. 2 positions are modified to phosphothreonine: T569 and T574. Position 582 is a phosphotyrosine (Y582).

The protein belongs to the protein kinase superfamily. Ser/Thr protein kinase family. In terms of tissue distribution, strictly expressed in siliques.

The protein resides in the membrane. It catalyses the reaction L-seryl-[protein] + ATP = O-phospho-L-seryl-[protein] + ADP + H(+). The enzyme catalyses L-threonyl-[protein] + ATP = O-phospho-L-threonyl-[protein] + ADP + H(+). Functionally, serine/threonine-protein kinase that may function as a signaling receptor of extracellular matrix component. Binding to pectin may have significance in the control of cell expansion, morphogenesis and development. This is Wall-associated receptor kinase 4 (WAK4) from Arabidopsis thaliana (Mouse-ear cress).